The sequence spans 404 residues: Glucose-1-phosphate adenylyltransferase (404 aa).

Alpha-D-glucose 1-phosphate contacts are provided by residues Tyr-99, Gly-164, 179–180, and Ser-197; that span reads EK.

This sequence belongs to the bacterial/plant glucose-1-phosphate adenylyltransferase family.

The enzyme catalyses alpha-D-glucose 1-phosphate + ATP + H(+) = ADP-alpha-D-glucose + diphosphate. The protein operates within glycan biosynthesis; glycogen biosynthesis. Functionally, involved in the biosynthesis of ADP-glucose, a building block, required in the biosynthesis of maltose-1-phosphate (M1P) and in the elongation reactions to produce linear alpha-1,4-glucans. Catalyzes the reaction between ATP and alpha-D-glucose 1-phosphate (G1P) to produce pyrophosphate and ADP-Glc. This is Glucose-1-phosphate adenylyltransferase from Mycolicibacterium gilvum (strain PYR-GCK) (Mycobacterium gilvum (strain PYR-GCK)).